The primary structure comprises 456 residues: Signal transduction histidine-protein kinase ArlS (456 aa).

A run of 2 helical transmembrane segments spans residues 13–33 and 157–177; these read LITT…IIFF and IVAL…SYIF. Residues 179–232 enclose the HAMP domain; sequence SQITKPIVTMSNKMNQIRRDGFQNKLELTTNYEETDNLIDTFNEMMYQIEESFN. The region spanning 240–456 is the Histidine kinase domain; the sequence is DASHELRTPL…TFKISFPVLN (217 aa). H243 is modified (phosphohistidine; by autocatalysis).

Autophosphorylated.

It is found in the cell membrane. It catalyses the reaction ATP + protein L-histidine = ADP + protein N-phospho-L-histidine.. Its function is as follows. Member of the two-component regulatory system ArlS/ArlR. ArlS probably functions as a sensor protein kinase which is autophosphorylated at a histidine residue and transfers its phosphate group to ArlR. The chain is Signal transduction histidine-protein kinase ArlS (arlS) from Staphylococcus epidermidis (strain ATCC 12228 / FDA PCI 1200).